Reading from the N-terminus, the 406-residue chain is Argininosuccinate synthase (406 aa).

ATP contacts are provided by residues 13-21 and alanine 40; that span reads AYSGGLDTS. L-citrulline contacts are provided by tyrosine 91 and serine 96. An ATP-binding site is contributed by glycine 121. Residues threonine 123, asparagine 127, and aspartate 128 each coordinate L-aspartate. Residue asparagine 127 coordinates L-citrulline. L-citrulline-binding residues include arginine 131, serine 180, serine 189, glutamate 265, and tyrosine 277.

This sequence belongs to the argininosuccinate synthase family. Type 1 subfamily. In terms of assembly, homotetramer.

It localises to the cytoplasm. The catalysed reaction is L-citrulline + L-aspartate + ATP = 2-(N(omega)-L-arginino)succinate + AMP + diphosphate + H(+). The protein operates within amino-acid biosynthesis; L-arginine biosynthesis; L-arginine from L-ornithine and carbamoyl phosphate: step 2/3. The polypeptide is Argininosuccinate synthase (Syntrophotalea carbinolica (strain DSM 2380 / NBRC 103641 / GraBd1) (Pelobacter carbinolicus)).